Consider the following 70-residue polypeptide: MPGIVLRSDDNFDASYRRFKKQTDRNLIVTEARARRFHETKTEKRKKFLIASRKKMLKRLYMMRRYESRL.

It belongs to the bacterial ribosomal protein bS21 family.

The sequence is that of Small ribosomal subunit protein bS21 from Sulfurimonas denitrificans (strain ATCC 33889 / DSM 1251) (Thiomicrospira denitrificans (strain ATCC 33889 / DSM 1251)).